We begin with the raw amino-acid sequence, 38 residues long: Toxic protein TimP (38 aa).

A transmembrane span lies at residues 1 to 20; that stretch reads MKVRCFCVVLLVSGTLCLHA.

Belongs to the TimP toxin family.

It localises to the cell inner membrane. Its function is as follows. Toxic component of a probable type I toxin-antitoxin (TA) system. Neutralized by sRNA antitoxin TimR which binds to the 5' UTR of timP mRNA and inhibits translation. When TimP is expressed from its promoter in the absence of antitoxin leads to mild cell stress; overexpression in situ is toxic to the cell and causes membrane leakage. The antitoxin gene is encoded immediately upstream and transcribed divergently from the toxin gene; antitoxin RNA is less stable than timP mRNA. The protein is Toxic protein TimP of Salmonella typhimurium (strain SL1344).